Reading from the N-terminus, the 178-residue chain is Probable DNA-directed RNA polymerase subunit delta (178 aa).

Residues 14-81 (LSLIDVAHFI…GNNTWGLRAW (68 aa)) enclose the HTH HARE-type domain. 2 disordered regions span residues 89 to 122 (EEVQ…DYDD) and 141 to 178 (LDED…PEDK). Composition is skewed to acidic residues over residues 105–122 (DDDD…DYDD), 141–150 (LDEDEDDDDH), and 161–178 (TVED…PEDK).

The protein belongs to the RpoE family. RNAP is composed of a core of 2 alpha, a beta and a beta' subunits. The core is associated with a delta subunit and one of several sigma factors.

Participates in both the initiation and recycling phases of transcription. In the presence of the delta subunit, RNAP displays an increased specificity of transcription, a decreased affinity for nucleic acids, and an increased efficiency of RNA synthesis because of enhanced recycling. The polypeptide is Probable DNA-directed RNA polymerase subunit delta (Listeria innocua serovar 6a (strain ATCC BAA-680 / CLIP 11262)).